The following is a 225-amino-acid chain: UPF0758 protein BP1235 (225 aa).

An MPN domain is found at 103–225 (ALANPDLVRR…TVSMAAQGHL (123 aa)). Residues histidine 174, histidine 176, and aspartate 187 each coordinate Zn(2+). The short motif at 174 to 187 (HNHPGGTAAASAAD) is the JAMM motif element.

It belongs to the UPF0758 family.

This Bordetella pertussis (strain Tohama I / ATCC BAA-589 / NCTC 13251) protein is UPF0758 protein BP1235.